A 115-amino-acid polypeptide reads, in one-letter code: U3-lycotoxin-Ls1g (115 aa).

A signal peptide spans 1-20 (MKFVLLFGVFLVTLFSYSSA). The propeptide occupies 21–44 (EMLDDFDQADEDELLSLIEKEEAR). Intrachain disulfides connect Cys-48–Cys-63, Cys-55–Cys-72, Cys-62–Cys-87, and Cys-74–Cys-85.

Belongs to the neurotoxin 19 (CSTX) family. 01 subfamily. Expressed by the venom gland.

The protein localises to the secreted. The chain is U3-lycotoxin-Ls1g from Lycosa singoriensis (Wolf spider).